A 187-amino-acid chain; its full sequence is UPF0301 protein Cpha266_0885 (187 aa).

Belongs to the UPF0301 (AlgH) family.

This is UPF0301 protein Cpha266_0885 from Chlorobium phaeobacteroides (strain DSM 266 / SMG 266 / 2430).